The chain runs to 652 residues: Threonine--tRNA ligase (652 aa).

One can recognise a TGS domain in the interval 1–64 (MPDVIRITFP…HEDGELVIIT (64 aa)). The tract at residues 245–542 (DHRKLGKELE…LIEEYKGAFP (298 aa)) is catalytic. Zn(2+)-binding residues include C338, H389, and H519.

Belongs to the class-II aminoacyl-tRNA synthetase family. In terms of assembly, homodimer. It depends on Zn(2+) as a cofactor.

Its subcellular location is the cytoplasm. It carries out the reaction tRNA(Thr) + L-threonine + ATP = L-threonyl-tRNA(Thr) + AMP + diphosphate + H(+). In terms of biological role, catalyzes the attachment of threonine to tRNA(Thr) in a two-step reaction: L-threonine is first activated by ATP to form Thr-AMP and then transferred to the acceptor end of tRNA(Thr). Also edits incorrectly charged L-seryl-tRNA(Thr). The sequence is that of Threonine--tRNA ligase from Geobacillus kaustophilus (strain HTA426).